A 132-amino-acid chain; its full sequence is ATP synthase epsilon chain, chloroplastic (132 aa).

The protein belongs to the ATPase epsilon chain family. As to quaternary structure, F-type ATPases have 2 components, CF(1) - the catalytic core - and CF(0) - the membrane proton channel. CF(1) has five subunits: alpha(3), beta(3), gamma(1), delta(1), epsilon(1). CF(0) has three main subunits: a, b and c.

It localises to the plastid. It is found in the chloroplast thylakoid membrane. Functionally, produces ATP from ADP in the presence of a proton gradient across the membrane. The chain is ATP synthase epsilon chain, chloroplastic from Coffea arabica (Arabian coffee).